The primary structure comprises 530 residues: Phosphoenolpyruvate carboxykinase (ATP) (530 aa).

Arg58, Tyr195, and Lys201 together coordinate substrate. Residues Lys201, His220, and Gly236–Thr244 each bind ATP. Lys201 and His220 together coordinate Mn(2+). Residue Asp257 coordinates Mn(2+). Residues Glu285, Arg321, Arg440–Ile441, and Thr446 contribute to the ATP site. A substrate-binding site is contributed by Arg321.

It belongs to the phosphoenolpyruvate carboxykinase (ATP) family. Mn(2+) is required as a cofactor.

It localises to the cytoplasm. It carries out the reaction oxaloacetate + ATP = phosphoenolpyruvate + ADP + CO2. It functions in the pathway carbohydrate biosynthesis; gluconeogenesis. Functionally, involved in the gluconeogenesis. Catalyzes the conversion of oxaloacetate (OAA) to phosphoenolpyruvate (PEP) through direct phosphoryl transfer between the nucleoside triphosphate and OAA. The chain is Phosphoenolpyruvate carboxykinase (ATP) from Staphylococcus haemolyticus (strain JCSC1435).